Consider the following 222-residue polypeptide: Superoxide dismutase [Mn], mitochondrial (222 aa).

The N-terminal 24 residues, M1–H24, are a transit peptide targeting the mitochondrion. H50 lines the Mn(2+) pocket. Y58 bears the 3'-nitrotyrosine mark. 2 positions are modified to N6-acetyllysine; alternate: K68 and K75. Residues K68 and K75 each carry the N6-succinyllysine; alternate modification. Residue H98 coordinates Mn(2+). N6-acetyllysine is present on K114. 2 positions are modified to N6-acetyllysine; alternate: K122 and K130. N6-succinyllysine; alternate is present on residues K122 and K130. Residues D183 and H187 each contribute to the Mn(2+) site. K202 is modified (N6-acetyllysine).

The protein belongs to the iron/manganese superoxide dismutase family. Homotetramer. Mn(2+) serves as cofactor. Nitrated under oxidative stress. Nitration coupled with oxidation inhibits the catalytic activity. In terms of processing, acetylation at Lys-122 decreases enzymatic activity. Deacetylated by SIRT3 upon exposure to ionizing radiations or after long fasting. Post-translationally, polyubiquitinated; leading to proteasomal degradation. Deubiquitinated by USP36 which increases protein stability.

Its subcellular location is the mitochondrion matrix. It catalyses the reaction 2 superoxide + 2 H(+) = H2O2 + O2. Destroys superoxide anion radicals which are normally produced within the cells and which are toxic to biological systems. The protein is Superoxide dismutase [Mn], mitochondrial (Sod2) of Mus musculus (Mouse).